A 353-amino-acid chain; its full sequence is DNA integrity scanning protein DisA (353 aa).

The 139-residue stretch at 6–144 folds into the DAC domain; it reads DKELMNILKI…GGIKYVLRDS (139 aa). ATP-binding positions include G73, L91, and 104-108; that span reads TRHRT.

It belongs to the DisA family. In terms of assembly, homooctamer. Mg(2+) serves as cofactor.

The catalysed reaction is 2 ATP = 3',3'-c-di-AMP + 2 diphosphate. In terms of biological role, participates in a DNA-damage check-point that is active prior to asymmetric division when DNA is damaged. DisA forms globular foci that rapidly scan along the chromosomes during sporulation, searching for lesions. When a lesion is present, DisA pauses at the lesion site. This triggers a cellular response that culminates in a temporary block in sporulation initiation. Functionally, also has diadenylate cyclase activity, catalyzing the condensation of 2 ATP molecules into cyclic di-AMP (c-di-AMP). c-di-AMP acts as a signaling molecule that couples DNA integrity with progression of sporulation. The rise in c-di-AMP level generated by DisA while scanning the chromosome, operates as a positive signal that advances sporulation; upon encountering a lesion, the DisA focus arrests at the damaged site and halts c-di-AMP synthesis. This is DNA integrity scanning protein DisA from Clostridium botulinum (strain Okra / Type B1).